We begin with the raw amino-acid sequence, 505 residues long: Phosphomevalonate kinase, peroxisomal (505 aa).

Ala-2 is modified (N-acetylalanine). Residues 57-65 carry the Peroxisomal targeting signal PTS2 motif; sequence DVKLTSPQL. Residue 177–187 coordinates ATP; the sequence is VAKTGLGSSAA.

Belongs to the GHMP kinase family. Mevalonate kinase subfamily.

It localises to the peroxisome. The catalysed reaction is (R)-5-phosphomevalonate + ATP = (R)-5-diphosphomevalonate + ADP. Its pathway is isoprenoid biosynthesis; isopentenyl diphosphate biosynthesis via mevalonate pathway; isopentenyl diphosphate from (R)-mevalonate: step 2/3. The protein is Phosphomevalonate kinase, peroxisomal of Arabidopsis thaliana (Mouse-ear cress).